The following is a 378-amino-acid chain: 7-methylxanthine methyltransferase 1 (378 aa).

The S-adenosyl-L-homocysteine site is built by Y18, C61, N66, D100, L101, S139, F140, and C156. Residues Y157, H160, and W161 each contribute to the theobromine site. 4 residues coordinate Mg(2+): N178, D260, F262, and N263. Y362 is a theobromine binding site.

It belongs to the methyltransferase superfamily. Type-7 methyltransferase family. Mg(2+) is required as a cofactor. Mainly expressed, at low levels, in leaves and fruits (grains). Also present, at lower levels, in roots, stamens and pistils.

The protein localises to the cytoplasm. The enzyme catalyses 7-methylxanthine + S-adenosyl-L-methionine = theobromine + S-adenosyl-L-homocysteine + H(+). It functions in the pathway alkaloid biosynthesis. Its function is as follows. Involved in the biosynthesis of caffeine. Catalyzes the conversion of 7-methylxanthine (7mX) to theobromine and of paraxanthine to caffeine. The chain is 7-methylxanthine methyltransferase 1 from Coffea canephora (Robusta coffee).